We begin with the raw amino-acid sequence, 77 residues long: Acyl carrier protein (77 aa).

Positions 1–76 (MATFDDVKAV…DVVNYIDNLK (76 aa)) constitute a Carrier domain. Ser-36 is modified (O-(pantetheine 4'-phosphoryl)serine).

This sequence belongs to the acyl carrier protein (ACP) family. 4'-phosphopantetheine is transferred from CoA to a specific serine of apo-ACP by AcpS. This modification is essential for activity because fatty acids are bound in thioester linkage to the sulfhydryl of the prosthetic group.

Its subcellular location is the cytoplasm. The protein operates within lipid metabolism; fatty acid biosynthesis. Its function is as follows. Carrier of the growing fatty acid chain in fatty acid biosynthesis. The polypeptide is Acyl carrier protein (Campylobacter jejuni (strain RM1221)).